A 46-amino-acid polypeptide reads, in one-letter code: Bacteriocin acidocin 8912 (46 aa).

Residues 1-20 (MISSHQKTLTDKELALISGG) constitute a propeptide that is removed on maturation.

Its subcellular location is the secreted. Has a bactericidal effect on sensitive cells but not a bacteriolytic effect. This Lactobacillus acidophilus protein is Bacteriocin acidocin 8912 (acdT).